A 222-amino-acid polypeptide reads, in one-letter code: Endonuclease V (222 aa).

Residues aspartate 34 and aspartate 102 each coordinate Mg(2+).

It belongs to the endonuclease V family. Mg(2+) serves as cofactor.

The protein localises to the cytoplasm. It carries out the reaction Endonucleolytic cleavage at apurinic or apyrimidinic sites to products with a 5'-phosphate.. Its function is as follows. DNA repair enzyme involved in the repair of deaminated bases. Selectively cleaves double-stranded DNA at the second phosphodiester bond 3' to a deoxyinosine leaving behind the intact lesion on the nicked DNA. The protein is Endonuclease V of Photorhabdus laumondii subsp. laumondii (strain DSM 15139 / CIP 105565 / TT01) (Photorhabdus luminescens subsp. laumondii).